A 369-amino-acid polypeptide reads, in one-letter code: MKAKRIVFKVGTSSLTNADGSLSRAKVKEITRQLALLHEAGHELILVSSGAIAAGFSSLGFKKRPTKVADKQASAAVGQGLLLEEYTTNLLLKQIISAQILLTQDDFADKRRYKNAHQALSVLLNRGAIPIINENDTVAIEELKVGDNDTLSAQVAAMVQADLLVLLTDVDGLYTANPSTNPDARRLEKIEKISSELIDMAGGAGTSNGTGGMLTKIKAATLATMSGVPVYICSSLKSDALLEAAEESKDGSLFLAQEKGLKTQKQWLAFYAKSQGEIYVDQGAADALRNNGKSLLVSGLVSVLGSFAYQDTVTVYEDGSGAILGKGRVRFGKSSLKDMLKSNKPKGVVIHRDDWISLTPELNDLFAEF.

Position 9 (Lys-9) interacts with ATP. Residues Ser-49, Asp-136, and Asn-148 each contribute to the substrate site. ATP-binding positions include 168–169 (TD) and 210–216 (TGGMLTK). The region spanning 275-355 (QGEIYVDQGA…KGVVIHRDDW (81 aa)) is the PUA domain.

It belongs to the glutamate 5-kinase family.

It localises to the cytoplasm. It catalyses the reaction L-glutamate + ATP = L-glutamyl 5-phosphate + ADP. It functions in the pathway amino-acid biosynthesis; L-proline biosynthesis; L-glutamate 5-semialdehyde from L-glutamate: step 1/2. In terms of biological role, catalyzes the transfer of a phosphate group to glutamate to form L-glutamate 5-phosphate. In Streptococcus sanguinis (strain SK36), this protein is Glutamate 5-kinase.